We begin with the raw amino-acid sequence, 282 residues long: DNA-directed RNA polymerase III subunit RPC5 (282 aa).

The disordered stretch occupies residues 1–70; sequence MSIDNKLFVT…TGEEEEDDPV (70 aa). Composition is skewed to acidic residues over residues 10-35 and 60-70; these read TEED…DMIA and DTGEEEEDDPV. T61 is modified (phosphothreonine).

As to quaternary structure, component of the RNA polymerase III (Pol III) complex consisting of 17 subunits. Interacts with RPC53/RPC4. RPC53/RPC4, RPC37/RPC5 and RPC11/RPC10 probably form a Pol III subcomplex.

It is found in the nucleus. In terms of biological role, DNA-dependent RNA polymerase catalyzes the transcription of DNA into RNA using the four ribonucleoside triphosphates as substrates. Specific peripheric component of RNA polymerase III which synthesizes small RNAs, such as 5S rRNA and tRNAs. The RPC53/RPC4-RPC37/RPC5 subcomplex is required for terminator recognition and reinitiation. The chain is DNA-directed RNA polymerase III subunit RPC5 (RPC37) from Saccharomyces cerevisiae (strain ATCC 204508 / S288c) (Baker's yeast).